We begin with the raw amino-acid sequence, 315 residues long: ADP/ATP translocase 4 (315 aa).

Over 1–19 the chain is Mitochondrial intermembrane; sequence MHREPPKKKAEKRLFDASS. The Solcar 1 repeat unit spans residues 18–110; it reads SSFGKDLLAG…FAFKDKYKQL (93 aa). A helical membrane pass occupies residues 20–49; that stretch reads FGKDLLAGGVAAAVSKTAVAPIERVKLLLQ. Residues 50-86 lie on the Mitochondrial matrix side of the membrane; it reads VQASSKQISPEARYKGMVDCLVRIPREQGFFSFWRGN. A helical membrane pass occupies residues 87–111; sequence LANVIRYFPTQALNFAFKDKYKQLF. The ADP site is built by Arg-92 and Lys-104. The Mitochondrial intermembrane portion of the chain corresponds to 112–121; sequence MSGVNKEKQF. The chain crosses the membrane as a helical span at residues 122–142; that stretch reads WRWFLANLASGGAAGATSLCV. Solcar repeat units lie at residues 123 to 213 and 220 to 307; these read RWFL…VKGL and TPFL…IKEF. The Mitochondrial matrix segment spans residues 143-190; sequence VYPLDFARTRLGVDIGKGPEERQFKGLGDCIMKIAKSDGIAGLYQGFG. A helical membrane pass occupies residues 191–211; that stretch reads VSVQGIIVYRASYFGAYDTVK. Topologically, residues 212–222 are mitochondrial intermembrane; that stretch reads GLLPKPKKTPF. The helical transmembrane segment at 223–243 threads the bilayer; the sequence is LVSFFIAQVVTTCSGILSYPF. Residues 244–283 are Mitochondrial matrix-facing; it reads DTVRRRMMMQSGEAKRQYKGTLDCFVKIYQHEGINSFFRG. Arg-247 serves as a coordination point for ADP. An important for transport activity region spans residues 247 to 252; sequence RRRMMM. Positions 247-252 match the Nucleotide carrier signature motif motif; the sequence is RRRMMM. Residues 284–301 form a helical membrane-spanning segment; the sequence is AFSNVLRGTGGALVLVLY. At 302-315 the chain is on the mitochondrial intermembrane side; it reads DKIKEFFHIDIGGR.

This sequence belongs to the mitochondrial carrier (TC 2.A.29) family. Monomer.

Its subcellular location is the mitochondrion inner membrane. It is found in the membrane. It localises to the cell projection. The protein resides in the cilium. The protein localises to the flagellum membrane. It catalyses the reaction ADP(in) + ATP(out) = ADP(out) + ATP(in). It carries out the reaction dATP(out) + ADP(in) = dATP(in) + ADP(out). The enzyme catalyses dADP(in) + ADP(out) = dADP(out) + ADP(in). The catalysed reaction is H(+)(in) = H(+)(out). The matrix-open state (m-state) is inhibited by the membrane-permeable bongkrekic acid (BKA). The cytoplasmic-open state (c-state) is inhibited by the membrane-impermeable toxic inhibitor carboxyatractyloside (CATR). Proton transporter activity is inhibited by ADP:ATP antiporter activity. Functionally, ADP:ATP antiporter that mediates import of ADP into the mitochondrial matrix for ATP synthesis, and export of ATP out to fuel the cell. Cycles between the cytoplasmic-open state (c-state) and the matrix-open state (m-state): operates by the alternating access mechanism with a single substrate-binding site intermittently exposed to either the cytosolic (c-state) or matrix (m-state) side of the inner mitochondrial membrane. Specifically required during spermatogenesis, probably to mediate ADP:ATP exchange in spermatocytes. Large ATP supplies from mitochondria may be critical for normal progression of spermatogenesis during early stages of meiotic prophase I, including DNA double-strand break repair and chromosomal synapsis. In addition to its ADP:ATP antiporter activity, also involved in mitochondrial uncoupling and mitochondrial permeability transition pore (mPTP) activity. Plays a role in mitochondrial uncoupling by acting as a proton transporter: proton transport uncouples the proton flows via the electron transport chain and ATP synthase to reduce the efficiency of ATP production and cause mitochondrial thermogenesis. Proton transporter activity is inhibited by ADP:ATP antiporter activity, suggesting that SLC25A31/ANT4 acts as a master regulator of mitochondrial energy output by maintaining a delicate balance between ATP production (ADP:ATP antiporter activity) and thermogenesis (proton transporter activity). Proton transporter activity requires free fatty acids as cofactor, but does not transport it. Among nucleotides, may also exchange ADP for dATP and dADP. Also plays a key role in mPTP opening, a non-specific pore that enables free passage of the mitochondrial membranes to solutes of up to 1.5 kDa, and which contributes to cell death. It is however unclear if SLC25A31/ANT4 constitutes a pore-forming component of mPTP or regulates it. The sequence is that of ADP/ATP translocase 4 from Macaca fascicularis (Crab-eating macaque).